A 198-amino-acid chain; its full sequence is Putative Do-like 15 protein (198 aa).

Residues 48 to 198 are serine protease; it reads KIFSFSREPN…VFENDSPSDK (151 aa). Active-site charge relay system residues include histidine 86 and serine 175.

It belongs to the peptidase S1B family.

The sequence is that of Putative Do-like 15 protein (DEGP15) from Arabidopsis thaliana (Mouse-ear cress).